The primary structure comprises 493 residues: 3-octaprenyl-4-hydroxybenzoate carboxy-lyase (493 aa).

Residue Asn172 coordinates Mn(2+). Residues 175-177, 189-191, and 194-195 contribute to the prenylated FMN site; these read IYR, RWL, and RG. Mn(2+) is bound at residue Glu238. Asp287 functions as the Proton donor in the catalytic mechanism.

This sequence belongs to the UbiD family. In terms of assembly, homohexamer. Requires prenylated FMN as cofactor. Mn(2+) is required as a cofactor.

The protein resides in the cell membrane. The enzyme catalyses a 4-hydroxy-3-(all-trans-polyprenyl)benzoate + H(+) = a 2-(all-trans-polyprenyl)phenol + CO2. Its pathway is cofactor biosynthesis; ubiquinone biosynthesis. Its function is as follows. Catalyzes the decarboxylation of 3-octaprenyl-4-hydroxy benzoate to 2-octaprenylphenol, an intermediate step in ubiquinone biosynthesis. The polypeptide is 3-octaprenyl-4-hydroxybenzoate carboxy-lyase (Shewanella putrefaciens (strain CN-32 / ATCC BAA-453)).